The following is a 338-amino-acid chain: Tetraacyldisaccharide 4'-kinase (338 aa).

ATP is bound at residue 63 to 70; it reads TVGGSGKT.

This sequence belongs to the LpxK family.

The catalysed reaction is a lipid A disaccharide + ATP = a lipid IVA + ADP + H(+). The protein operates within glycolipid biosynthesis; lipid IV(A) biosynthesis; lipid IV(A) from (3R)-3-hydroxytetradecanoyl-[acyl-carrier-protein] and UDP-N-acetyl-alpha-D-glucosamine: step 6/6. Functionally, transfers the gamma-phosphate of ATP to the 4'-position of a tetraacyldisaccharide 1-phosphate intermediate (termed DS-1-P) to form tetraacyldisaccharide 1,4'-bis-phosphate (lipid IVA). The protein is Tetraacyldisaccharide 4'-kinase of Shewanella loihica (strain ATCC BAA-1088 / PV-4).